A 902-amino-acid polypeptide reads, in one-letter code: Potassium/sodium hyperpolarization-activated cyclic nucleotide-gated channel 1 (902 aa).

Residues 1–75 are disordered; that stretch reads MEGGGKPNSA…PAGSFEDAEG (75 aa). At 1–131 the chain is on the cytoplasmic side; sequence MEGGGKPNSA…WIIHPYSDFR (131 aa). The helical transmembrane segment at 132–153 threads the bilayer; sequence FYWDLIMLIMMVGNLVIIPVGI. Over 154–162 the chain is Extracellular; it reads TFFTEQTTT. A helical transmembrane segment spans residues 163 to 183; sequence PWIIFNVASDTVFLLDLIMNF. Residues 184-204 lie on the Cytoplasmic side of the membrane; it reads RTGTVNEDSSEIILDPKVIKM. A helical transmembrane segment spans residues 205–225; it reads NYLKSWFVVDFISSIPVDYIF. The Extracellular portion of the chain corresponds to 226 to 249; that stretch reads LIVEKGMDSEVYKTARALRIVRFT. The chain crosses the membrane as a helical; Voltage-sensor span at residues 250 to 270; the sequence is KILSLLRLLRLSRLIRYIHQW. The Cytoplasmic portion of the chain corresponds to 271–284; sequence EEIFHMTYDLASAV. A helical membrane pass occupies residues 285–307; the sequence is VRIFNLIGMMLLLCHWDGCLQFL. Over 308–333 the chain is Extracellular; that stretch reads VPLLQDFPPDCWVSLNEMVNDSWGKQ. An N-linked (GlcNAc...) asparagine glycan is attached at asparagine 327. Residues 334–355 constitute an intramembrane region (pore-forming); sequence YSYALFKAMSHMLCIGYGAQAP. Positions 347-351 match the Selectivity filter motif; sequence CIGYG. Residues 356–360 lie on the Extracellular side of the membrane; the sequence is VSMSD. The chain crosses the membrane as a helical span at residues 361–381; the sequence is LWITMLSMIVGATCYAMFVGH. At 382-902 the chain is on the cytoplasmic side; it reads ATALIQSLDS…AEKPRFASNL (521 aa). Residues glycine 528, glutamate 529, cysteine 531, arginine 538, threonine 539, arginine 579, and arginine 582 each contribute to the 3',5'-cyclic AMP site. Disordered regions lie at residues 634–681, 713–824, and 858–902; these read TALN…QPSA, ASQL…VGES, and MSSG…ASNL. Composition is skewed to low complexity over residues 639–680, 720–736, and 744–769; these read TSST…PQPS, QQPQ…QTQP, and QPQQ…QQPQ. Polar residues predominate over residues 770-793; sequence TPGSSTPKNEVHKSTQALHNTNLT. A compositionally biased stretch (pro residues) spans 867–877; the sequence is RGVPPAPPPPA. The span at 889–902 shows a compositional bias: basic and acidic residues; the sequence is KDPDAEKPRFASNL.

The protein belongs to the potassium channel HCN family. As to quaternary structure, homotetramer. Heterotetramer with HCN2. The potassium channel is composed of a homo- or heterotetrameric complex of pore-forming subunits. Interacts with KCNE2. Interacts with the SH3 domain of CSK. Highly expressed in cerebral cortex, cerebellum, throughout the hippocampus, in medial habenula, anterior dorsal nucleus in the thalamus, tenia tecta, several nuclei of the general motor system and in optic nerve layer. Detected in a subset of elongated cells in taste buds.

It localises to the cell membrane. The enzyme catalyses Na(+)(in) = Na(+)(out). It catalyses the reaction K(+)(in) = K(+)(out). Its activity is regulated as follows. Activated by cAMP, and at 10-100 times higher concentrations, also by cGMP. cAMP binding promotes tetramerization and formation of an active channel. Compared to other family members, cAMP has less stimulatory effect on HCN1 because part of the molecules already contain bound cAMP and form homotetramers when cAMP levels are low, this inherent tetramerization in HCN1 results in a weaker response to increased cAMP. In terms of biological role, hyperpolarization-activated ion channel that are permeable to sodium and potassium ions. Exhibits weak selectivity for potassium over sodium ions. Contributes to the native pacemaker currents in heart (If) and in neurons (Ih). Participates in cerebellar mechanisms of motor learning. May mediate responses to sour stimuli. In Rattus norvegicus (Rat), this protein is Potassium/sodium hyperpolarization-activated cyclic nucleotide-gated channel 1 (Hcn1).